A 59-amino-acid chain; its full sequence is U-scoloptoxin(23)-Er2a (59 aa).

Belongs to the scoloptoxin-23 family. In terms of processing, contains 1 disulfide bond. In terms of tissue distribution, expressed by the venom gland.

The protein resides in the secreted. The protein is U-scoloptoxin(23)-Er2a of Ethmostigmus rubripes (Giant centipede).